Reading from the N-terminus, the 231-residue chain is MSSPVLKCQSVHKVYVQGKESIEVLRGVNIALYPEQTVAIVGASGSGKSTLLNIMGALDHPSSGSISISGQDVSDMDEKAKARLRNAHVGFVYQFHHLLPEFSALENVCMPLLLRGVAVKEAKKEAEYWLGRVGLSHRLKHRPGQLSGGERQRVAIARALSPRPSCVLMDEPTGNLDPETAESVQALLWDLVRQNQTSFVLVTHDYRLAARMDEQYSLEEGVLAKVAPNSL.

The ABC transporter domain occupies 6–231 (LKCQSVHKVY…VLAKVAPNSL (226 aa)). Residue 42 to 49 (GASGSGKS) coordinates ATP.

This sequence belongs to the ABC transporter superfamily. Lipoprotein translocase (TC 3.A.1.125) family. As to quaternary structure, the complex is composed of two ATP-binding proteins (LolD) and two transmembrane proteins (LolC and LolE).

It is found in the cell inner membrane. In terms of biological role, part of the ABC transporter complex LolCDE involved in the translocation of mature outer membrane-directed lipoproteins, from the inner membrane to the periplasmic chaperone, LolA. Responsible for the formation of the LolA-lipoprotein complex in an ATP-dependent manner. The polypeptide is Lipoprotein-releasing system ATP-binding protein LolD (Hahella chejuensis (strain KCTC 2396)).